Reading from the N-terminus, the 685-residue chain is Kinesin-like protein KIP2 (685 aa).

Disordered stretches follow at residues 11–46 (EHVGSAGASLPQTPGSRSFALGAHPGPQKRIGGPAQ) and 63–101 (SRPSSPYMQASPLLKGSESGGSAGSPQSPDAPSSASGAS). Residues 86–101 (GSPQSPDAPSSASGAS) are compositionally biased toward low complexity. Positions 113 to 446 (NVSVAIRIKP…VRFASRAKNI (334 aa)) constitute a Kinesin motor domain. 185–192 (GMTGSGKT) contributes to the ATP binding site. Coiled-coil stretches lie at residues 464 to 486 (IIQNLRKQLDEQHETIVMLRRSA) and 520 to 663 (LEVE…SALS). The interval 485–510 (SAAAPSGNGSTSPLDSPGVGGTSLSE) is disordered.

Belongs to the TRAFAC class myosin-kinesin ATPase superfamily. Kinesin family.

The protein resides in the cytoplasm. It is found in the cytoskeleton. Its function is as follows. Required for assembly of the mitotic spindle. The protein is Kinesin-like protein KIP2 (KIP2) of Eremothecium gossypii (strain ATCC 10895 / CBS 109.51 / FGSC 9923 / NRRL Y-1056) (Yeast).